The sequence spans 377 residues: Presenilin-associated rhomboid-like protein, mitochondrial (377 aa).

Residues 1–50 (MALQGWVQRGWRCGPAWAPPLGGGYRELSATQAPRLLGRRFNLFVQQKCG) constitute a mitochondrion transit peptide. At 51 to 99 (FRKAPRKVEPRRSDTGSSGEAYKRSALIPPLEETVFYPSPYPIRTLVKP) the chain is on the mitochondrial matrix side. Phosphoserine is present on residues S63 and S68. Residues 100-119 (FFFTIGFTGCAFGSAAIWQY) traverse the membrane as a helical segment. The Mitochondrial intermembrane segment spans residues 120–165 (ESLKSRVQSYFDGIKADWLDSIRPQKEGNLRKEINKWWNSLSDGQR). Residues 166–185 (TVTGIIAANALVFCLWRVPS) form a helical membrane-spanning segment. The Mitochondrial matrix portion of the chain corresponds to 186–205 (LQRTMIRYFTSNPASKVLCS). The chain crosses the membrane as a helical span at residues 206 to 228 (PMLLSTFSHFSLFHMAANMYVLW). Residues 229–242 (SFSSSIVNILGQEQ) are Mitochondrial intermembrane-facing. Residues 243–260 (FVAVYLSAGVISNFVSYV) form a helical membrane-spanning segment. Residues 261–270 (CKVATGRYGP) lie on the Mitochondrial matrix side of the membrane. The helical transmembrane segment at 271-287 (SLGASGAIMTVLAAVCT) threads the bilayer. S275 serves as the catalytic Nucleophile. Residues 288–293 (KIPEGR) are Mitochondrial intermembrane-facing. Residues 294–316 (LAIIFLPVFTFTAGNALKAIIAM) form a helical membrane-spanning segment. Topologically, residues 317–330 (DTAGMILGWKFFDH) are mitochondrial matrix. A helical transmembrane segment spans residues 331 to 352 (AAHLGGALFGIWYITYGHELIW). H333 is a catalytic residue. At 353-377 (KNREPLVKIWHEIRTNGPKKGGGSK) the chain is on the mitochondrial intermembrane side.

Belongs to the peptidase S54 family. In terms of assembly, interacts with PSEN1 and PSEN2. Binds OPA1. Post-translationally, P-beta is proteolytically processed (beta-cleavage) in a PARL-dependent manner.

It localises to the mitochondrion inner membrane. It is found in the nucleus. The catalysed reaction is Cleaves type-1 transmembrane domains using a catalytic dyad composed of serine and histidine that are contributed by different transmembrane domains.. Functionally, required for the control of apoptosis during postnatal growth. Essential for proteolytic processing of an antiapoptotic form of OPA1 which prevents the release of mitochondrial cytochrome c in response to intrinsic apoptotic signals. Required for the maturation of PINK1 into its 52kDa mature form after its cleavage by mitochondrial-processing peptidase (MPP). Promotes cleavage of serine/threonine-protein phosphatase PGAM5 in damaged mitochondria in response to loss of mitochondrial membrane potential. Mediates differential cleavage of PINK1 and PGAM5 depending on the health status of mitochondria, disassociating from PINK1 and associating with PGAM5 in response to mitochondrial membrane potential loss. Required for processing of CLPB into a form with higher protein disaggregase activity by removing an autoinhibitory N-terminal peptide. Promotes processing of DIABLO/SMAC in the mitochondrion which is required for DIABLO apoptotic activity. Also required for cleavage of STARD7 and TTC19. Promotes changes in mitochondria morphology regulated by phosphorylation of P-beta domain. The polypeptide is Presenilin-associated rhomboid-like protein, mitochondrial (Parl) (Mus musculus (Mouse)).